The sequence spans 272 residues: Bis(5'-nucleosyl)-tetraphosphatase, symmetrical (272 aa).

It belongs to the Ap4A hydrolase family.

The catalysed reaction is P(1),P(4)-bis(5'-adenosyl) tetraphosphate + H2O = 2 ADP + 2 H(+). Its function is as follows. Hydrolyzes diadenosine 5',5'''-P1,P4-tetraphosphate to yield ADP. The sequence is that of Bis(5'-nucleosyl)-tetraphosphatase, symmetrical from Ectopseudomonas mendocina (strain ymp) (Pseudomonas mendocina).